Here is a 54-residue protein sequence, read N- to C-terminus: Large ribosomal subunit protein bL33 (54 aa).

The protein belongs to the bacterial ribosomal protein bL33 family.

This chain is Large ribosomal subunit protein bL33, found in Opitutus terrae (strain DSM 11246 / JCM 15787 / PB90-1).